The primary structure comprises 168 residues: Transcription antitermination protein NusB (168 aa).

This sequence belongs to the NusB family.

Functionally, involved in transcription antitermination. Required for transcription of ribosomal RNA (rRNA) genes. Binds specifically to the boxA antiterminator sequence of the ribosomal RNA (rrn) operons. The chain is Transcription antitermination protein NusB from Prosthecochloris aestuarii (strain DSM 271 / SK 413).